The chain runs to 300 residues: MHTMKKWLKISIEANPLMVEVVSDYLVGIHGAGVDLAADKDENPAGQIVAFIEQAELSTADAEKCATQISVFLAEMAAVFNVASPSLVWEFLEEEDWSKNWKEHFVPFTIVPGLIIAPTWENYEAQGDELVIEMDPGMAFGTGHHATTSLSLSYLQDVVTQRGAKTVLDVGCGTGILVMGAVLFGAERGLGIDNCPDAVAAASNNVVHNHLAEKIDIGITPLSELREEYDLVVANIIHDVLASMVLELYSRVKKEGHLILSGLLADQQVDSIIEIFAREGFVLLEKGIEGEWGAVLLQKR.

S-adenosyl-L-methionine-binding residues include Thr148, Gly171, Asp193, and Asn235.

This sequence belongs to the methyltransferase superfamily. PrmA family.

The protein resides in the cytoplasm. The catalysed reaction is L-lysyl-[protein] + 3 S-adenosyl-L-methionine = N(6),N(6),N(6)-trimethyl-L-lysyl-[protein] + 3 S-adenosyl-L-homocysteine + 3 H(+). In terms of biological role, methylates ribosomal protein L11. This is Ribosomal protein L11 methyltransferase from Desulfotalea psychrophila (strain LSv54 / DSM 12343).